Reading from the N-terminus, the 159-residue chain is MSSSKEQEAQKGKQGWITPAVIPPEEWATFRYRGKTLEELLNMPMDEFIKLLPARQRRSLKRGLKPEHRKLLEKIRKAKRLAAQGKKVVIKTHCRDMIILPEMVGLTIQVYNGITYIPVYISPWHIGHYLGEFALTTKIVQHGEPGLKATRSSLHIAAK.

It belongs to the universal ribosomal protein uS19 family.

Protein S19 forms a complex with S13 that binds strongly to the 16S ribosomal RNA. This Pyrobaculum arsenaticum (strain DSM 13514 / JCM 11321 / PZ6) protein is Small ribosomal subunit protein uS19.